Here is a 207-residue protein sequence, read N- to C-terminus: 3-isopropylmalate dehydratase small subunit (207 aa).

This sequence belongs to the LeuD family. LeuD type 1 subfamily. As to quaternary structure, heterodimer of LeuC and LeuD.

It catalyses the reaction (2R,3S)-3-isopropylmalate = (2S)-2-isopropylmalate. It functions in the pathway amino-acid biosynthesis; L-leucine biosynthesis; L-leucine from 3-methyl-2-oxobutanoate: step 2/4. Catalyzes the isomerization between 2-isopropylmalate and 3-isopropylmalate, via the formation of 2-isopropylmaleate. This Rhodospirillum rubrum (strain ATCC 11170 / ATH 1.1.1 / DSM 467 / LMG 4362 / NCIMB 8255 / S1) protein is 3-isopropylmalate dehydratase small subunit.